Consider the following 198-residue polypeptide: Recombination protein RecR (198 aa).

The C4-type zinc finger occupies 57–72 (CSICCNLSEHDPCPIC). Positions 80 to 175 (NIVCVVETPQ…KVTRLGYGLP (96 aa)) constitute a Toprim domain.

The protein belongs to the RecR family.

In terms of biological role, may play a role in DNA repair. It seems to be involved in an RecBC-independent recombinational process of DNA repair. It may act with RecF and RecO. This chain is Recombination protein RecR, found in Endomicrobium trichonymphae.